A 338-amino-acid polypeptide reads, in one-letter code: Holliday junction branch migration complex subunit RuvB (338 aa).

Positions 1–181 (MEERILTQNF…FGVINRLDYY (181 aa)) are large ATPase domain (RuvB-L). Residues Leu-20, Arg-21, Gly-62, Lys-65, Thr-66, Thr-67, 128-130 (EDF), Arg-171, Tyr-181, and Arg-218 each bind ATP. Thr-66 is a Mg(2+) binding site. A small ATPAse domain (RuvB-S) region spans residues 182–252 (SVEELKEIIK…TANIALNMLG (71 aa)). Residues 255–338 (EMGLEEIDRK…YVEQRRIEDV (84 aa)) form a head domain (RuvB-H) region. DNA-binding residues include Arg-310 and Arg-315.

This sequence belongs to the RuvB family. As to quaternary structure, homohexamer. Forms an RuvA(8)-RuvB(12)-Holliday junction (HJ) complex. HJ DNA is sandwiched between 2 RuvA tetramers; dsDNA enters through RuvA and exits via RuvB. An RuvB hexamer assembles on each DNA strand where it exits the tetramer. Each RuvB hexamer is contacted by two RuvA subunits (via domain III) on 2 adjacent RuvB subunits; this complex drives branch migration. In the full resolvosome a probable DNA-RuvA(4)-RuvB(12)-RuvC(2) complex forms which resolves the HJ.

The protein resides in the cytoplasm. The catalysed reaction is ATP + H2O = ADP + phosphate + H(+). In terms of biological role, the RuvA-RuvB-RuvC complex processes Holliday junction (HJ) DNA during genetic recombination and DNA repair, while the RuvA-RuvB complex plays an important role in the rescue of blocked DNA replication forks via replication fork reversal (RFR). RuvA specifically binds to HJ cruciform DNA, conferring on it an open structure. The RuvB hexamer acts as an ATP-dependent pump, pulling dsDNA into and through the RuvAB complex. RuvB forms 2 homohexamers on either side of HJ DNA bound by 1 or 2 RuvA tetramers; 4 subunits per hexamer contact DNA at a time. Coordinated motions by a converter formed by DNA-disengaged RuvB subunits stimulates ATP hydrolysis and nucleotide exchange. Immobilization of the converter enables RuvB to convert the ATP-contained energy into a lever motion, pulling 2 nucleotides of DNA out of the RuvA tetramer per ATP hydrolyzed, thus driving DNA branch migration. The RuvB motors rotate together with the DNA substrate, which together with the progressing nucleotide cycle form the mechanistic basis for DNA recombination by continuous HJ branch migration. Branch migration allows RuvC to scan DNA until it finds its consensus sequence, where it cleaves and resolves cruciform DNA. The chain is Holliday junction branch migration complex subunit RuvB from Caldanaerobacter subterraneus subsp. tengcongensis (strain DSM 15242 / JCM 11007 / NBRC 100824 / MB4) (Thermoanaerobacter tengcongensis).